The following is a 1164-amino-acid chain: DNA-directed RNA polymerase subunit beta (1164 aa).

This sequence belongs to the RNA polymerase beta chain family. In terms of assembly, the RNAP catalytic core consists of 2 alpha, 1 beta, 1 beta' and 1 omega subunit. When a sigma factor is associated with the core the holoenzyme is formed, which can initiate transcription.

It carries out the reaction RNA(n) + a ribonucleoside 5'-triphosphate = RNA(n+1) + diphosphate. DNA-dependent RNA polymerase catalyzes the transcription of DNA into RNA using the four ribonucleoside triphosphates as substrates. This Saccharopolyspora erythraea (strain ATCC 11635 / DSM 40517 / JCM 4748 / NBRC 13426 / NCIMB 8594 / NRRL 2338) protein is DNA-directed RNA polymerase subunit beta.